Consider the following 185-residue polypeptide: dTDP-4-dehydrorhamnose 3,5-epimerase (185 aa).

Substrate contacts are provided by residues R23, E28, 47–49 (QDN), and R59. The active-site Proton acceptor is H62. Substrate is bound by residues K72 and H119. The active-site Proton donor is Y132. Substrate is bound by residues D143 and K168.

Belongs to the dTDP-4-dehydrorhamnose 3,5-epimerase family. In terms of assembly, homodimer.

It catalyses the reaction dTDP-4-dehydro-6-deoxy-alpha-D-glucose = dTDP-4-dehydro-beta-L-rhamnose. Its pathway is carbohydrate biosynthesis; dTDP-L-rhamnose biosynthesis. The protein operates within bacterial outer membrane biogenesis; LPS O-antigen biosynthesis. Its function is as follows. Catalyzes the epimerization of the C3' and C5'positions of dTDP-6-deoxy-D-xylo-4-hexulose, forming dTDP-6-deoxy-L-lyxo-4-hexulose. The polypeptide is dTDP-4-dehydrorhamnose 3,5-epimerase (rfbC) (Escherichia coli (strain K12)).